A 418-amino-acid polypeptide reads, in one-letter code: D-amino acid dehydrogenase (418 aa).

An FAD-binding site is contributed by 3 to 17 (VLVLGAGVVGTTSAW).

It belongs to the DadA oxidoreductase family. FAD is required as a cofactor.

The catalysed reaction is a D-alpha-amino acid + A + H2O = a 2-oxocarboxylate + AH2 + NH4(+). The protein operates within amino-acid degradation; D-alanine degradation; NH(3) and pyruvate from D-alanine: step 1/1. Functionally, oxidative deamination of D-amino acids. This chain is D-amino acid dehydrogenase, found in Dechloromonas aromatica (strain RCB).